A 725-amino-acid polypeptide reads, in one-letter code: Eukaryotic translation initiation factor 3 subunit B (725 aa).

The region spanning 46–130 is the RRM domain; it reads NCVFIAGIPV…HTFTARSFKD (85 aa). WD repeat units follow at residues 202 to 240, 242 to 280, 354 to 395, 462 to 504, 510 to 552, and 554 to 594; these read RANWTETVFTWSPHGSYLSTIHKQGIILWGGKDYARAHR, AHTNVQYIDFSPCETYLVTYAAPEESNSWGDCEKDSLRI, VNIE…SMQR, PLSE…HAPK, DAGV…AKRT, and VIEH…FTFQ.

The protein belongs to the eIF-3 subunit B family. As to quaternary structure, component of the eukaryotic translation initiation factor 3 (eIF-3) complex.

The protein resides in the cytoplasm. In terms of biological role, RNA-binding component of the eukaryotic translation initiation factor 3 (eIF-3) complex, which is involved in protein synthesis of a specialized repertoire of mRNAs and, together with other initiation factors, stimulates binding of mRNA and methionyl-tRNAi to the 40S ribosome. The eIF-3 complex specifically targets and initiates translation of a subset of mRNAs involved in cell proliferation. This Caenorhabditis elegans protein is Eukaryotic translation initiation factor 3 subunit B.